The sequence spans 320 residues: Putative GDP-polyphosphate phosphotransferase PKK2A (320 aa).

Disordered regions lie at residues 1-21, 246-267, and 281-320; these read MRKK…PKLD, RPLP…PPRD, and EERI…KSKK. Positions 12–21 are enriched in basic and acidic residues; that stretch reads DFRKNPPKLD. Positions 281–290 are enriched in basic and acidic residues; sequence EERIKKEEKA.

It belongs to the polyphosphate kinase 2 (PPK2) family. Class I subfamily.

The catalysed reaction is [phosphate](n) + GTP = [phosphate](n+1) + GDP. The chain is Putative GDP-polyphosphate phosphotransferase PKK2A from Corynebacterium glutamicum (strain ATCC 13032 / DSM 20300 / JCM 1318 / BCRC 11384 / CCUG 27702 / LMG 3730 / NBRC 12168 / NCIMB 10025 / NRRL B-2784 / 534).